A 198-amino-acid polypeptide reads, in one-letter code: Recombination protein RecR (198 aa).

A C4-type zinc finger spans residues 57-72 (CSICGNLTESDPCAIC). Residues 80 to 175 (TTILVVEESK…KVTRLARGLA (96 aa)) form the Toprim domain.

The protein belongs to the RecR family.

Its function is as follows. May play a role in DNA repair. It seems to be involved in an RecBC-independent recombinational process of DNA repair. It may act with RecF and RecO. In Lactococcus lactis subsp. lactis (strain IL1403) (Streptococcus lactis), this protein is Recombination protein RecR.